A 40-amino-acid polypeptide reads, in one-letter code: Photosystem II reaction center protein J (40 aa).

Residues 8–28 (IPLWVIGTVAGILVIGLIGIF) form a helical membrane-spanning segment.

This sequence belongs to the PsbJ family. As to quaternary structure, PSII is composed of 1 copy each of membrane proteins PsbA, PsbB, PsbC, PsbD, PsbE, PsbF, PsbH, PsbI, PsbJ, PsbK, PsbL, PsbM, PsbT, PsbX, PsbY, PsbZ, Psb30/Ycf12, at least 3 peripheral proteins of the oxygen-evolving complex and a large number of cofactors. It forms dimeric complexes.

It localises to the plastid. The protein localises to the chloroplast thylakoid membrane. Functionally, one of the components of the core complex of photosystem II (PSII). PSII is a light-driven water:plastoquinone oxidoreductase that uses light energy to abstract electrons from H(2)O, generating O(2) and a proton gradient subsequently used for ATP formation. It consists of a core antenna complex that captures photons, and an electron transfer chain that converts photonic excitation into a charge separation. In Lepidium virginicum (Virginia pepperweed), this protein is Photosystem II reaction center protein J.